Consider the following 327-residue polypeptide: GMP reductase (327 aa).

Cys175 acts as the Thioimidate intermediate in catalysis. NADP(+) is bound at residue 204–227 (IIADGGIRTPGDIAKSIRFGATMV).

It belongs to the IMPDH/GMPR family. GuaC type 2 subfamily.

It carries out the reaction IMP + NH4(+) + NADP(+) = GMP + NADPH + 2 H(+). Catalyzes the irreversible NADPH-dependent deamination of GMP to IMP. It functions in the conversion of nucleobase, nucleoside and nucleotide derivatives of G to A nucleotides, and in maintaining the intracellular balance of A and G nucleotides. The polypeptide is GMP reductase (Clostridium acetobutylicum (strain ATCC 824 / DSM 792 / JCM 1419 / IAM 19013 / LMG 5710 / NBRC 13948 / NRRL B-527 / VKM B-1787 / 2291 / W)).